The following is a 206-amino-acid chain: Histidine biosynthesis bifunctional protein HisIE (206 aa).

Residues 1–114 (MLKKINFIDI…FQVPSENLFF (114 aa)) form a phosphoribosyl-AMP cyclohydrolase region. A phosphoribosyl-ATP pyrophosphohydrolase region spans residues 115–206 (LHDLDCMLKF…NLKMRSNKQV (92 aa)).

In the N-terminal section; belongs to the PRA-CH family. The protein in the C-terminal section; belongs to the PRA-PH family.

It localises to the cytoplasm. It carries out the reaction 1-(5-phospho-beta-D-ribosyl)-ATP + H2O = 1-(5-phospho-beta-D-ribosyl)-5'-AMP + diphosphate + H(+). The enzyme catalyses 1-(5-phospho-beta-D-ribosyl)-5'-AMP + H2O = 1-(5-phospho-beta-D-ribosyl)-5-[(5-phospho-beta-D-ribosylamino)methylideneamino]imidazole-4-carboxamide. It functions in the pathway amino-acid biosynthesis; L-histidine biosynthesis; L-histidine from 5-phospho-alpha-D-ribose 1-diphosphate: step 2/9. The protein operates within amino-acid biosynthesis; L-histidine biosynthesis; L-histidine from 5-phospho-alpha-D-ribose 1-diphosphate: step 3/9. This Buchnera aphidicola subsp. Baizongia pistaciae (strain Bp) protein is Histidine biosynthesis bifunctional protein HisIE (hisI).